Reading from the N-terminus, the 253-residue chain is Vitamin B12 import ATP-binding protein BtuD (253 aa).

In terms of domain architecture, ABC transporter spans 4–236 (LQLSNVSVDT…NILSEVFEVD (233 aa)). 32–39 (GPNGAGKS) lines the ATP pocket.

The protein belongs to the ABC transporter superfamily. Vitamin B12 importer (TC 3.A.1.13.1) family. In terms of assembly, the complex is composed of two ATP-binding proteins (BtuD), two transmembrane proteins (BtuC) and a solute-binding protein (BtuF).

It is found in the cell inner membrane. It catalyses the reaction an R-cob(III)alamin(out) + ATP + H2O = an R-cob(III)alamin(in) + ADP + phosphate + H(+). Part of the ABC transporter complex BtuCDF involved in vitamin B12 import. Responsible for energy coupling to the transport system. This is Vitamin B12 import ATP-binding protein BtuD from Yersinia enterocolitica serotype O:8 / biotype 1B (strain NCTC 13174 / 8081).